We begin with the raw amino-acid sequence, 541 residues long: Membrane protein insertase YidC (541 aa).

The next 5 helical transmembrane spans lie at leucine 7–tyrosine 27, leucine 345–tyrosine 365, leucine 415–phenylalanine 435, leucine 453–leucine 473, and phenylalanine 492–tryptophan 512.

Belongs to the OXA1/ALB3/YidC family. Type 1 subfamily. Interacts with the Sec translocase complex via SecD. Specifically interacts with transmembrane segments of nascent integral membrane proteins during membrane integration.

Its subcellular location is the cell inner membrane. In terms of biological role, required for the insertion and/or proper folding and/or complex formation of integral membrane proteins into the membrane. Involved in integration of membrane proteins that insert both dependently and independently of the Sec translocase complex, as well as at least some lipoproteins. Aids folding of multispanning membrane proteins. This chain is Membrane protein insertase YidC, found in Histophilus somni (strain 129Pt) (Haemophilus somnus).